The primary structure comprises 393 residues: S-adenosylmethionine synthase (393 aa).

Glutamate 9 is a binding site for Mg(2+). Histidine 15 contacts ATP. Glutamate 43 contributes to the K(+) binding site. L-methionine is bound by residues glutamate 56 and glutamine 99. ATP is bound by residues 167-169 (DGK), 235-238 (SGRF), aspartate 246, 252-253 (RK), alanine 269, lysine 273, and lysine 277. Aspartate 246 provides a ligand contact to L-methionine. An L-methionine-binding site is contributed by lysine 277.

The protein belongs to the AdoMet synthase family. As to quaternary structure, homotetramer. The cofactor is Mn(2+). It depends on Mg(2+) as a cofactor. Co(2+) serves as cofactor. Requires K(+) as cofactor.

The protein resides in the cytoplasm. The enzyme catalyses L-methionine + ATP + H2O = S-adenosyl-L-methionine + phosphate + diphosphate. It participates in amino-acid biosynthesis; S-adenosyl-L-methionine biosynthesis; S-adenosyl-L-methionine from L-methionine: step 1/1. Functionally, catalyzes the formation of S-adenosylmethionine from methionine and ATP. The reaction comprises two steps that are both catalyzed by the same enzyme: formation of S-adenosylmethionine (AdoMet) and triphosphate, and subsequent hydrolysis of the triphosphate. This is S-adenosylmethionine synthase (SAMS) from Brassica rapa subsp. pekinensis (Chinese cabbage).